The following is a 261-amino-acid chain: Synaptophysin-like protein 1 (261 aa).

At 1-33 the chain is on the cytoplasmic side; that stretch reads MASKANMVRQRFSRLSQRMSAFQINLNPLKEPL. One can recognise an MARVEL domain in the interval 28 to 239; sequence PLKEPLGFIK…NAWFVYKETS (212 aa). The chain crosses the membrane as a helical span at residues 34-54; it reads GFIKILEWFASIFAFATCGGF. Residues 55 to 117 lie on the Vesicular side of the membrane; that stretch reads KGKTEIQVNC…LIGDYSSSAQ (63 aa). 2 N-linked (GlcNAc...) asparagine glycosylation sites follow: N72 and N95. Residues 118–138 form a helical membrane-spanning segment; sequence FYVTFAVFVFLYCIAALLLYV. Topologically, residues 139-151 are cytoplasmic; sequence GYTNLYRDSRKLP. The helical transmembrane segment at 152–172 threads the bilayer; that stretch reads MIDFIVTLVATFLWLVSSSAW. Residues 173-214 lie on the Vesicular side of the membrane; it reads AKALTDIKVATGHRIVEELEICNPESGVSCYFVSVTSMGSLN. N214 is a glycosylation site (N-linked (GlcNAc...) asparagine). The helical transmembrane segment at 215–235 threads the bilayer; sequence VSVIFGFLNMILWGGNAWFVY. Residues 236 to 261 are Cytoplasmic-facing; that stretch reads KETSLHSPSNTSASHSQGGGPPTSGM. A compositionally biased stretch (polar residues) spans 241–251; that stretch reads HSPSNTSASHS. Residues 241-261 are disordered; that stretch reads HSPSNTSASHSQGGGPPTSGM. The segment covering 252–261 has biased composition (gly residues); sequence QGGGPPTSGM.

The protein belongs to the synaptophysin/synaptobrevin family. As to expression, ubiquitously expressed.

The protein resides in the cytoplasmic vesicle membrane. Its subcellular location is the melanosome. The protein is Synaptophysin-like protein 1 (Sypl1) of Mus musculus (Mouse).